Here is a 206-residue protein sequence, read N- to C-terminus: Thymidylate kinase (206 aa).

An ATP-binding site is contributed by 16–23 (GIDGTGKS).

This sequence belongs to the thymidylate kinase family.

The catalysed reaction is dTMP + ATP = dTDP + ADP. Functionally, phosphorylation of dTMP to form dTDP in both de novo and salvage pathways of dTTP synthesis. This chain is Thymidylate kinase, found in Akkermansia muciniphila (strain ATCC BAA-835 / DSM 22959 / JCM 33894 / BCRC 81048 / CCUG 64013 / CIP 107961 / Muc).